The chain runs to 90 residues: Small ribosomal subunit protein uS17 (90 aa).

The protein belongs to the universal ribosomal protein uS17 family. Part of the 30S ribosomal subunit.

In terms of biological role, one of the primary rRNA binding proteins, it binds specifically to the 5'-end of 16S ribosomal RNA. The sequence is that of Small ribosomal subunit protein uS17 from Acidiphilium cryptum (strain JF-5).